The sequence spans 495 residues: MSTLALVAFVLWAAFLRYLPKILNFLRLQRFAKTLPGPTIGELIANVKKGEILNWLKELREKHGPVFRIWFGKDLMVMFTDPEDIKQLLGNNQLLTKSRNYELLEPWLGKGLLTNGGESWHRRRKLLTPGFHFRILSEFKEPMEENCRILVRRLRTKANGESFDIYPYITLFALDAICETAMGIKKHAQLQSDSEYVQAVQSICRVMHKQSFSFWQRLNVFFKHTKPGKEREAALKVLHDETNRVIRLRREQLIQERNEWKPEAEQDDVGAKRRLAFLDMLLLTQMEGGAELSDTDIREEVDTFMFEGHDTTSSAIAFALSLLSKNPDVQQRAFEEASELEGREKESMPYLEAVIKETLRIYPSVPFFSRKVLEDLEVGKLTVPKGASISCLIYMLHRDPKNFPDPERFDPDRFLVNEKQMHPFAFAAFSAGPRNCIGQKFAMLELKTSLAMLLRSYRFLPDKDHQPKPLAELVTKSGNGIRLRILPRDENGTTA.

Positions 307 and 436 each coordinate heme.

Belongs to the cytochrome P450 family. Heme is required as a cofactor.

It localises to the endoplasmic reticulum membrane. It is found in the microsome membrane. Its function is as follows. May be involved in the metabolism of insect hormones and in the breakdown of synthetic insecticides. This chain is Probable cytochrome P450 4s3 (Cyp4s3), found in Drosophila melanogaster (Fruit fly).